A 347-amino-acid polypeptide reads, in one-letter code: Microtubule-associated protein Jupiter (347 aa).

The segment covering 1 to 14 (MISNFDCTDNQASS) has biased composition (polar residues). The disordered stretch occupies residues 1-33 (MISNFDCTDNQASSKVLRPPGGGSSDIFGSEMP). Ser24 is modified (phosphoserine). Phosphothreonine is present on residues Thr35 and Thr96. Phosphoserine occurs at positions 105, 134, and 145. Disordered regions lie at residues 127 to 193 (HYNG…PTPP) and 303 to 347 (GNPV…SGLW). Over residues 132–145 (SGSVSSASSSVSSS) the composition is skewed to low complexity. Residues 146–164 (TENLKMNSGSRSVFRNMST) show a composition bias toward polar residues. Over residues 181-193 (PPSPVPIEVPTPP) the composition is skewed to pro residues.

The protein belongs to the MAP Jupiter family.

It is found in the nucleus. The protein resides in the cytoplasm. The protein localises to the cytoskeleton. Its subcellular location is the spindle. Functionally, binds to all microtubule populations. In Drosophila yakuba (Fruit fly), this protein is Microtubule-associated protein Jupiter.